Reading from the N-terminus, the 183-residue chain is Outer membrane protein H.8 (183 aa).

The first 17 residues, 1–17 (MKAYLALISAAVIGLAA), serve as a signal peptide directing secretion. Cysteine 18 carries the N-palmitoyl cysteine lipid modification. A lipid anchor (S-diacylglycerol cysteine) is attached at cysteine 18. The interval 27–51 (AEATPAAEAPASEAPAAEAAPADAA) is disordered. In terms of domain architecture, Plastocyanin-like spans 57 to 183 (GNCAATVESN…LMNGKVTLVD (127 aa)). Cu cation-binding residues include histidine 102, cysteine 166, histidine 171, and methionine 175.

Requires Cu cation as cofactor.

It is found in the cell outer membrane. This chain is Outer membrane protein H.8, found in Neisseria meningitidis serogroup B (strain ATCC BAA-335 / MC58).